A 184-amino-acid polypeptide reads, in one-letter code: Dual-action ribosomal maturation protein DarP (184 aa).

The disordered stretch occupies residues 1–21 (MYKHPDEEWLDEIPGQQENED).

Belongs to the DarP family.

Its subcellular location is the cytoplasm. Functionally, member of a network of 50S ribosomal subunit biogenesis factors which assembles along the 30S-50S interface, preventing incorrect 23S rRNA structures from forming. Promotes peptidyl transferase center (PTC) maturation. This Edwardsiella ictaluri (strain 93-146) protein is Dual-action ribosomal maturation protein DarP.